Here is a 382-residue protein sequence, read N- to C-terminus: Galactokinase (382 aa).

Position 34–37 (34–37 (EHTD)) interacts with substrate. 124–130 (GAGLSSS) is an ATP binding site. S130 and E162 together coordinate Mg(2+). The active-site Proton acceptor is D174. Position 223 (Y223) interacts with substrate.

This sequence belongs to the GHMP kinase family. GalK subfamily.

The protein resides in the cytoplasm. The catalysed reaction is alpha-D-galactose + ATP = alpha-D-galactose 1-phosphate + ADP + H(+). Its pathway is carbohydrate metabolism; galactose metabolism. Functionally, catalyzes the transfer of the gamma-phosphate of ATP to D-galactose to form alpha-D-galactose-1-phosphate (Gal-1-P). The polypeptide is Galactokinase (Escherichia coli O9:H4 (strain HS)).